An 806-amino-acid polypeptide reads, in one-letter code: DNA topoisomerase 1 (806 aa).

A compositionally biased stretch (low complexity) spans Met-1–Ser-15. Positions Met-1–Lys-236 are disordered. Positions Asp-24–Pro-34 are enriched in basic and acidic residues. Composition is skewed to basic residues over residues Arg-49–Lys-60 and Glu-98–Lys-108. The segment covering Ser-113–Glu-127 has biased composition (acidic residues). Basic and acidic residues predominate over residues Glu-128 to Asp-137. Over residues Asp-138–Glu-153 the composition is skewed to acidic residues. Residues Glu-159 to Lys-176 are compositionally biased toward basic residues. Positions Lys-177–Glu-188 are enriched in basic and acidic residues. Residues Glu-189 to Asp-199 show a composition bias toward acidic residues. Residues Lys-210 to Glu-229 show a composition bias toward basic and acidic residues. Interaction with DNA regions lie at residues Lys-467 to Tyr-468, Arg-530 to Lys-535, and Thr-634 to Lys-636. One can recognise a Topo IB-type catalytic domain in the interval Ser-474 to Glu-803. The O-(3'-phospho-DNA)-tyrosine intermediate role is filled by Tyr-761.

This sequence belongs to the type IB topoisomerase family. Expressed in male germ cells and in mature sperm.

Its subcellular location is the nucleus. It localises to the nucleolus. The protein resides in the chromosome. It catalyses the reaction ATP-independent breakage of single-stranded DNA, followed by passage and rejoining.. Functionally, releases the supercoiling and torsional tension of DNA introduced during the DNA replication and transcription by transiently cleaving and rejoining one strand of the DNA duplex. Introduces a single-strand break via transesterification at a target site in duplex DNA. The scissile phosphodiester is attacked by the catalytic tyrosine of the enzyme, resulting in the formation of a DNA-(3'-phosphotyrosyl)-enzyme intermediate and the expulsion of a 5'-OH DNA strand. The free DNA strand then rotates around the intact phosphodiester bond on the opposing strand, thus removing DNA supercoils. Finally, in the religation step, the DNA 5'-OH attacks the covalent intermediate to expel the active-site tyrosine and restore the DNA phosphodiester backbone. Required for normal spermatogenesis and oogenesis. This chain is DNA topoisomerase 1 (top-1), found in Caenorhabditis elegans.